Reading from the N-terminus, the 398-residue chain is Succinate--CoA ligase [ADP-forming] subunit beta (398 aa).

The ATP-grasp domain maps to 9 to 254 (KAVLREFGVP…ESEEDAKEIE (246 aa)). ATP contacts are provided by residues K46, 53 to 55 (GRG), E109, S112, and E117. The Mg(2+) site is built by N209 and D223. Substrate contacts are provided by residues N274 and 331 to 333 (GIM).

This sequence belongs to the succinate/malate CoA ligase beta subunit family. Heterotetramer of two alpha and two beta subunits. Mg(2+) serves as cofactor.

The catalysed reaction is succinate + ATP + CoA = succinyl-CoA + ADP + phosphate. It catalyses the reaction GTP + succinate + CoA = succinyl-CoA + GDP + phosphate. It functions in the pathway carbohydrate metabolism; tricarboxylic acid cycle; succinate from succinyl-CoA (ligase route): step 1/1. Functionally, succinyl-CoA synthetase functions in the citric acid cycle (TCA), coupling the hydrolysis of succinyl-CoA to the synthesis of either ATP or GTP and thus represents the only step of substrate-level phosphorylation in the TCA. The beta subunit provides nucleotide specificity of the enzyme and binds the substrate succinate, while the binding sites for coenzyme A and phosphate are found in the alpha subunit. The protein is Succinate--CoA ligase [ADP-forming] subunit beta of Rhodopseudomonas palustris (strain HaA2).